Reading from the N-terminus, the 628-residue chain is Phosphomethylpyrimidine synthase (628 aa).

Substrate is bound by residues Asn229, Met258, Tyr287, His323, 343 to 345 (SRG), 384 to 387 (DGLR), and Glu423. A Zn(2+)-binding site is contributed by His427. Tyr450 provides a ligand contact to substrate. A Zn(2+)-binding site is contributed by His491. Residues Cys571, Cys574, and Cys579 each contribute to the [4Fe-4S] cluster site.

Belongs to the ThiC family. In terms of assembly, homodimer. It depends on [4Fe-4S] cluster as a cofactor.

The enzyme catalyses 5-amino-1-(5-phospho-beta-D-ribosyl)imidazole + S-adenosyl-L-methionine = 4-amino-2-methyl-5-(phosphooxymethyl)pyrimidine + CO + 5'-deoxyadenosine + formate + L-methionine + 3 H(+). It participates in cofactor biosynthesis; thiamine diphosphate biosynthesis. Catalyzes the synthesis of the hydroxymethylpyrimidine phosphate (HMP-P) moiety of thiamine from aminoimidazole ribotide (AIR) in a radical S-adenosyl-L-methionine (SAM)-dependent reaction. This is Phosphomethylpyrimidine synthase from Variovorax paradoxus (strain S110).